The following is a 121-amino-acid chain: Large ribosomal subunit protein bL20 (121 aa).

This sequence belongs to the bacterial ribosomal protein bL20 family.

Functionally, binds directly to 23S ribosomal RNA and is necessary for the in vitro assembly process of the 50S ribosomal subunit. It is not involved in the protein synthesizing functions of that subunit. The chain is Large ribosomal subunit protein bL20 from Polynucleobacter necessarius subsp. necessarius (strain STIR1).